A 145-amino-acid polypeptide reads, in one-letter code: Peptide methionine sulfoxide reductase MsrB (145 aa).

One can recognise a MsrB domain in the interval Lys6–Val129. The active-site Nucleophile is Cys118.

The protein belongs to the MsrB Met sulfoxide reductase family.

It catalyses the reaction L-methionyl-[protein] + [thioredoxin]-disulfide + H2O = L-methionyl-(R)-S-oxide-[protein] + [thioredoxin]-dithiol. This chain is Peptide methionine sulfoxide reductase MsrB, found in Listeria monocytogenes serotype 4b (strain CLIP80459).